A 92-amino-acid polypeptide reads, in one-letter code: Phospholemman (92 aa).

Residues 1–20 (MASPGHILIVCVCLLSMASA) form the signal peptide. The Extracellular segment spans residues 21-35 (EAPQEPDPFTYDYHT). A helical membrane pass occupies residues 36 to 56 (LRIGGLTIAGILFILGILIIL). Residues 57–92 (SKRCRCKFNQQQRTGEPDEEEGTFRSSIRRLSTRRR) are Cytoplasmic-facing. Cys-60 is lipidated: S-palmitoyl cysteine. Cys-62 is modified (S-glutathionyl cysteine; alternate). Cys-62 carries the S-palmitoyl cysteine; alternate lipid modification. The segment at 66–92 (QQQRTGEPDEEEGTFRSSIRRLSTRRR) is disordered. Position 79 is a phosphothreonine (Thr-79). Ser-82 bears the Phosphoserine mark. Ser-83 carries the post-translational modification Phosphoserine; by PKA and PKC. Residues 83 to 92 (SIRRLSTRRR) show a composition bias toward basic residues. Ser-88 carries the post-translational modification Phosphoserine; by PKA. Thr-89 is subject to Phosphothreonine; by PKC.

This sequence belongs to the FXYD family. In terms of assembly, homotetramer. Monomer. Regulatory subunit of the sodium/potassium-transporting ATPase (NKA) which is composed of a catalytic alpha subunit, a non-catalytic beta subunit and an additional regulatory subunit. The monomeric form associates with NKA while the oligomeric form does not. Interacts with the catalytic alpha-1 subunit ATP1A1. Also interacts with the catalytic alpha-2 and alpha-3 subunits ATP1A2 and ATP1A3. Very little interaction with ATP1A1, ATP1A2 or ATP1A3 when phosphorylated at Ser-83. Interacts with the non-catalytic beta-1 subunit ATP1B1. Oxidative stress decreases interaction with ATP1A1 but increases interaction with ATP1B1. In terms of processing, major plasma membrane substrate for cAMP-dependent protein kinase (PKA) and protein kinase C (PKC) in several different tissues. Phosphorylated in response to insulin and adrenergic stimulation. Phosphorylation at Ser-88 stimulates sodium/potassium-transporting ATPase activity while the unphosphorylated form inhibits sodium/potassium-transporting ATPase activity. Phosphorylation increases tetramerization, decreases binding to ATP1A1 and reduces inhibition of ATP1A1 activity. Phosphorylation at Ser-83 leads to greatly reduced interaction with ATP1A1, ATP1A2 and ATP1A3. May be phosphorylated by DMPK. Post-translationally, palmitoylation increases half-life and stability and is enhanced upon phosphorylation at Ser-88 by PKA. As to expression, in adult brain, highest levels are found in the cerebellum and in the lateral, third and fourth ventricles of the choroid plexus (at protein level). Also detected in cells of a portion of the ependymal lining of the lateral ventricle on its rostral surface posterior to the caudate putamen (at protein level). Expressed in a subset of neurons which secrete gonadotropin-releasing hormone.

The protein localises to the cell membrane. The protein resides in the sarcolemma. It is found in the apical cell membrane. It localises to the membrane. Its subcellular location is the caveola. The protein localises to the T-tubule. Its function is as follows. Associates with and regulates the activity of the sodium/potassium-transporting ATPase (NKA) which transports Na(+) out of the cell and K(+) into the cell. Inhibits NKA activity in its unphosphorylated state and stimulates activity when phosphorylated. Reduces glutathionylation of the NKA beta-1 subunit ATP1B1, thus reversing glutathionylation-mediated inhibition of ATP1B1. Contributes to female sexual development by maintaining the excitability of neurons which secrete gonadotropin-releasing hormone. This chain is Phospholemman, found in Rattus norvegicus (Rat).